The sequence spans 328 residues: Tetraacyldisaccharide 4'-kinase (328 aa).

58 to 65 (TMGGAGKT) contacts ATP.

This sequence belongs to the LpxK family.

The enzyme catalyses a lipid A disaccharide + ATP = a lipid IVA + ADP + H(+). Its pathway is glycolipid biosynthesis; lipid IV(A) biosynthesis; lipid IV(A) from (3R)-3-hydroxytetradecanoyl-[acyl-carrier-protein] and UDP-N-acetyl-alpha-D-glucosamine: step 6/6. Its function is as follows. Transfers the gamma-phosphate of ATP to the 4'-position of a tetraacyldisaccharide 1-phosphate intermediate (termed DS-1-P) to form tetraacyldisaccharide 1,4'-bis-phosphate (lipid IVA). This chain is Tetraacyldisaccharide 4'-kinase, found in Phenylobacterium zucineum (strain HLK1).